A 273-amino-acid chain; its full sequence is Protein FAM216A (273 aa).

Residues 1–47 (MLGQLLPHTARGLGAAEMPGQGPGSDWTERSSSAEPPAVAGTEGGGG) form a disordered region.

It belongs to the FAM216 family.

This chain is Protein FAM216A (FAM216A), found in Homo sapiens (Human).